A 487-amino-acid chain; its full sequence is Aspartyl/glutamyl-tRNA(Asn/Gln) amidotransferase subunit B (487 aa).

Belongs to the GatB/GatE family. GatB subfamily. In terms of assembly, heterotrimer of A, B and C subunits.

The catalysed reaction is L-glutamyl-tRNA(Gln) + L-glutamine + ATP + H2O = L-glutaminyl-tRNA(Gln) + L-glutamate + ADP + phosphate + H(+). The enzyme catalyses L-aspartyl-tRNA(Asn) + L-glutamine + ATP + H2O = L-asparaginyl-tRNA(Asn) + L-glutamate + ADP + phosphate + 2 H(+). In terms of biological role, allows the formation of correctly charged Asn-tRNA(Asn) or Gln-tRNA(Gln) through the transamidation of misacylated Asp-tRNA(Asn) or Glu-tRNA(Gln) in organisms which lack either or both of asparaginyl-tRNA or glutaminyl-tRNA synthetases. The reaction takes place in the presence of glutamine and ATP through an activated phospho-Asp-tRNA(Asn) or phospho-Glu-tRNA(Gln). This is Aspartyl/glutamyl-tRNA(Asn/Gln) amidotransferase subunit B from Acidiphilium cryptum (strain JF-5).